Here is a 143-residue protein sequence, read N- to C-terminus: Nucleoside diphosphate kinase (143 aa).

The ATP site is built by Lys-11, Phe-59, Arg-87, Thr-93, Arg-104, and Asn-114. His-117 acts as the Pros-phosphohistidine intermediate in catalysis.

The protein belongs to the NDK family. Homotetramer. The cofactor is Mg(2+).

The protein localises to the cytoplasm. It catalyses the reaction a 2'-deoxyribonucleoside 5'-diphosphate + ATP = a 2'-deoxyribonucleoside 5'-triphosphate + ADP. It carries out the reaction a ribonucleoside 5'-diphosphate + ATP = a ribonucleoside 5'-triphosphate + ADP. Major role in the synthesis of nucleoside triphosphates other than ATP. The ATP gamma phosphate is transferred to the NDP beta phosphate via a ping-pong mechanism, using a phosphorylated active-site intermediate. The chain is Nucleoside diphosphate kinase from Alcanivorax borkumensis (strain ATCC 700651 / DSM 11573 / NCIMB 13689 / SK2).